The following is a 215-amino-acid chain: NAD(P)H-quinone oxidoreductase subunit I (215 aa).

4Fe-4S ferredoxin-type domains are found at residues 55 to 84 and 95 to 124; these read GRIH…VDWV and RNYS…MTEE. [4Fe-4S] cluster contacts are provided by cysteine 64, cysteine 67, cysteine 70, cysteine 74, cysteine 104, cysteine 107, cysteine 110, and cysteine 114. Positions 169–180 are enriched in basic and acidic residues; it reads MDPHGVASDRPR. A disordered region spans residues 169–215; sequence MDPHGVASDRPRAGQLPAQVLETLTPPAKPTAKNDGQSSSEAKEGDA.

Belongs to the complex I 23 kDa subunit family. As to quaternary structure, NDH-1 is composed of at least 11 different subunits. The cofactor is [4Fe-4S] cluster.

It localises to the cellular thylakoid membrane. It carries out the reaction a plastoquinone + NADH + (n+1) H(+)(in) = a plastoquinol + NAD(+) + n H(+)(out). It catalyses the reaction a plastoquinone + NADPH + (n+1) H(+)(in) = a plastoquinol + NADP(+) + n H(+)(out). NDH-1 shuttles electrons from an unknown electron donor, via FMN and iron-sulfur (Fe-S) centers, to quinones in the respiratory and/or the photosynthetic chain. The immediate electron acceptor for the enzyme in this species is believed to be plastoquinone. Couples the redox reaction to proton translocation, and thus conserves the redox energy in a proton gradient. In Synechococcus sp. (strain CC9605), this protein is NAD(P)H-quinone oxidoreductase subunit I.